The primary structure comprises 484 residues: tRNA sulfurtransferase (484 aa).

A THUMP domain is found at 63–167 (REMIERLTCT…LDRLFVIHRQ (105 aa)). ATP contacts are provided by residues 185–186 (LM), K267, G289, and Q298. C346 and C457 are oxidised to a cystine. Positions 405–483 (VLPGQIVIDI…GHTNVRVYRP (79 aa)) constitute a Rhodanese domain. The Cysteine persulfide intermediate role is filled by C457.

It belongs to the ThiI family.

It localises to the cytoplasm. The catalysed reaction is [ThiI sulfur-carrier protein]-S-sulfanyl-L-cysteine + a uridine in tRNA + 2 reduced [2Fe-2S]-[ferredoxin] + ATP + H(+) = [ThiI sulfur-carrier protein]-L-cysteine + a 4-thiouridine in tRNA + 2 oxidized [2Fe-2S]-[ferredoxin] + AMP + diphosphate. It carries out the reaction [ThiS sulfur-carrier protein]-C-terminal Gly-Gly-AMP + S-sulfanyl-L-cysteinyl-[cysteine desulfurase] + AH2 = [ThiS sulfur-carrier protein]-C-terminal-Gly-aminoethanethioate + L-cysteinyl-[cysteine desulfurase] + A + AMP + 2 H(+). The protein operates within cofactor biosynthesis; thiamine diphosphate biosynthesis. Its function is as follows. Catalyzes the ATP-dependent transfer of a sulfur to tRNA to produce 4-thiouridine in position 8 of tRNAs, which functions as a near-UV photosensor. Also catalyzes the transfer of sulfur to the sulfur carrier protein ThiS, forming ThiS-thiocarboxylate. This is a step in the synthesis of thiazole, in the thiamine biosynthesis pathway. The sulfur is donated as persulfide by IscS. In Pseudomonas aeruginosa (strain LESB58), this protein is tRNA sulfurtransferase.